Reading from the N-terminus, the 182-residue chain is Putative manganese efflux pump MntP (182 aa).

Transmembrane regions (helical) follow at residues 6–26 (LIPLIIMAFALGMDAFSVSLG), 37–57 (ILYIGVTIGIFHIIMPFIGMV), 71–91 (HFAGAILLIGLGFYIVYSSIL), 101–121 (IGISLFVFAFGVSIDSFSVGL), 131–151 (IITILLFGFVSMLLAWTGLFI), and 162–182 (YGEIVGGIILVGFGLYLLFPI).

It belongs to the MntP (TC 9.B.29) family.

The protein resides in the cell membrane. Its function is as follows. Probably functions as a manganese efflux pump. The protein is Putative manganese efflux pump MntP of Bacillus thuringiensis subsp. konkukian (strain 97-27).